Reading from the N-terminus, the 258-residue chain is uncharacterized protein (258 aa).

The region spanning 3–58 (VAERQQKIVEIVNMRSSIRVSELSDIFSVTEETIRRDLEKLEKEHKLSRSHGGAVS) is the HTH deoR-type domain. The segment at residues 20 to 39 (IRVSELSDIFSVTEETIRRD) is a DNA-binding region (H-T-H motif).

This is an uncharacterized protein from Bacillus subtilis (strain 168).